A 505-amino-acid polypeptide reads, in one-letter code: Maturase K (505 aa).

The protein belongs to the intron maturase 2 family. MatK subfamily.

Its subcellular location is the plastid. It localises to the chloroplast. Functionally, usually encoded in the trnK tRNA gene intron. Probably assists in splicing its own and other chloroplast group II introns. The chain is Maturase K from Physcomitrium patens (Spreading-leaved earth moss).